Here is a 342-residue protein sequence, read N- to C-terminus: N-acetyl-gamma-glutamyl-phosphate reductase (342 aa).

The active site involves C146.

This sequence belongs to the NAGSA dehydrogenase family. Type 1 subfamily.

It is found in the cytoplasm. The enzyme catalyses N-acetyl-L-glutamate 5-semialdehyde + phosphate + NADP(+) = N-acetyl-L-glutamyl 5-phosphate + NADPH + H(+). It participates in amino-acid biosynthesis; L-arginine biosynthesis; N(2)-acetyl-L-ornithine from L-glutamate: step 3/4. In terms of biological role, catalyzes the NADPH-dependent reduction of N-acetyl-5-glutamyl phosphate to yield N-acetyl-L-glutamate 5-semialdehyde. The sequence is that of N-acetyl-gamma-glutamyl-phosphate reductase from Thermobifida fusca (strain YX).